Consider the following 313-residue polypeptide: MTIRNQRFSLLKQPISSTLNQHLVDYPTPSNLSYWWGFGPLAGTMILSVLSSPALVSGLMVARAKNLVHSVLFPIPIFFSINQLFHYFCRLPIIKHLATKCQLLLFLISHFLLLLVLTKLVLDLGGYLFMDDLSRALSQFVPGFSGGLGGGSNTPPNPSGDFFLSSYQTSDPDYHDQRRGDSYFSSAPGVQETHRHASGSSTNLHLNLNDQSQDPIFLEVERLSLKCDKVKEKTILKTQSLLLERGYHIPDERDIERAINVVMTEHETIDIDRRRKRFYYLYSCLGKTGNKFWMELLETLADYNINIKSDSDN.

Helical transmembrane passes span 41-61, 68-88, and 102-122; these read LAGTMILSVLSSPALVSGLMV, VHSVLFPIPIFFSINQLFHYF, and QLLLFLISHFLLLLVLTKLVL.

The protein belongs to the cytochrome b family.

The protein localises to the mitochondrion membrane. This is an uncharacterized protein from Arabidopsis thaliana (Mouse-ear cress).